Consider the following 113-residue polypeptide: Biotrophy-associated secreted protein 3 (113 aa).

An N-terminal signal peptide occupies residues 1–20 (MQFSTVSFAIFAILPAMVAA).

The protein resides in the secreted. Secreted effector involved in biotrophic colonization of plant cells. This chain is Biotrophy-associated secreted protein 3, found in Pyricularia oryzae (strain 70-15 / ATCC MYA-4617 / FGSC 8958) (Rice blast fungus).